The sequence spans 345 residues: REAAERSKMIDRNLREDGEKASKEVKLLLLGAGESGKSTIVKQMKIIHEDGYSEEECRQYKVVVYSNTIQSIIAIIRAMGRLRIDFGDVARADDARQLFVLASSAEEGVMSPELAGVIQRLWEDSGVQACFSRSREYQLNDSASYYLSDIERIAQGSYIPTQQDVLRTRVKTTGIVETHFTFKDLYFKMFDVGGQRSERKKWIHCFEGVTAIIFCVALSDYDLLLAEDEEMNRMHESMKLFDSICNNKWFIDTSIILFLNKKDLFEEKISRSPLTICYPEYSGSNTYEEAAAYIQCQFEDLNRRKDTKEIYTHFTCATDTKNVQFVFDAVTDVIIKSNLMECGLY.

In terms of domain architecture, G-alpha spans lysine 23–tyrosine 345. Residues lysine 26–threonine 39 are G1 motif. Residues glycine 33, glutamate 34, serine 35, glycine 36, lysine 37, serine 38, threonine 39, aspartate 141, serine 142, leucine 166, arginine 167, threonine 168, arginine 169, valine 170, lysine 171, threonine 172, valine 192, glycine 194, asparagine 260, lysine 261, aspartate 263, leucine 264, cysteine 316, alanine 317, and threonine 318 each contribute to the GTP site. Residue serine 38 coordinates Mg(2+). A G2 motif region spans residues aspartate 164–threonine 172. Threonine 172 provides a ligand contact to Mg(2+). Residues phenylalanine 187 to arginine 196 form a G3 motif region. A G4 motif region spans residues isoleucine 256–aspartate 263. Residues threonine 315–threonine 320 are G5 motif.

It belongs to the G-alpha family. G(i/o/t/z) subfamily. In terms of assembly, heterotrimeric G proteins are composed of 3 units; alpha, beta and gamma. The alpha subunit contains the guanine nucleotide binding site. GTP binding causes dissociation of the heterotrimer, liberating the individual subunits so that they can interact with downstream effector proteins.

It localises to the cytoplasm. Its subcellular location is the cell membrane. It is found in the cytoskeleton. The protein resides in the microtubule organizing center. The protein localises to the centrosome. It localises to the membrane. Functionally, heterotrimeric guanine nucleotide-binding proteins (G proteins) function as transducers downstream of G protein-coupled receptors (GPCRs) in numerous signaling cascades. The alpha chain contains the guanine nucleotide binding site and alternates between an active, GTP-bound state and an inactive, GDP-bound state. Signaling by an activated GPCR promotes GDP release and GTP binding. The alpha subunit has a low GTPase activity that converts bound GTP to GDP, thereby terminating the signal. Both GDP release and GTP hydrolysis are modulated by numerous regulatory proteins. Signaling is mediated via effector proteins, such as adenylate cyclase. Inhibits adenylate cyclase activity, leading to decreased intracellular cAMP levels. Stimulates the activity of receptor-regulated K(+) channels. The active GTP-bound form prevents the association of RGS14 with centrosomes and is required for the translocation of RGS14 from the cytoplasm to the plasma membrane. May play a role in cell division. The active GTP-bound form activates the calcium permeant TRPC5 ion channels. The polypeptide is Guanine nucleotide-binding protein G(i) subunit alpha-3 (gnai3) (Xenopus laevis (African clawed frog)).